The chain runs to 120 residues: MGLPQIHRLKHRQDFQAVYGTGKRYHGSHLTLISLEDSCPDAPGPSRFGISISKKVSKKAVVRNRLKRQIRAVIRELLPEIAAGWRGIIIIRPGAIECNYEHFLRELKQLLVKANIIHGH.

It belongs to the RnpA family. As to quaternary structure, consists of a catalytic RNA component (M1 or rnpB) and a protein subunit.

The enzyme catalyses Endonucleolytic cleavage of RNA, removing 5'-extranucleotides from tRNA precursor.. RNaseP catalyzes the removal of the 5'-leader sequence from pre-tRNA to produce the mature 5'-terminus. It can also cleave other RNA substrates such as 4.5S RNA. The protein component plays an auxiliary but essential role in vivo by binding to the 5'-leader sequence and broadening the substrate specificity of the ribozyme. In Microcystis aeruginosa (strain NIES-843 / IAM M-2473), this protein is Ribonuclease P protein component.